The primary structure comprises 352 residues: MIFHPRPSPIAAAMYQLRDLGVDAIILHGPSGCCFRTARLLELDGVRVFTSNIDENAIVFGASENLKKALDYAIEYLKKELKKERPMIGIVGTCASMIIGEDLWEFVDDDRAIIIPVEVHSGSGDNTIGAIKAMESALKLGIIDEKEFERQKFLLKKATEVEKKRGMAKKEYIKPTYDDDLNEAIKVLKDLKEKDGKIACVLNAKKETAYLFAHPLIVLNKYFNCVNIANLDINKGLPKIRRDAQNILRRFKADYITGGLDEYPITGERAVEILKDLDVDAIVVSGVPHALPIEEIDKDIIKIGISDGPRTYHPIKEIYDYAIVELDAHAKVLGKRDIVKSRFGEILDYALE.

Belongs to the NifD/NifK/NifE/NifN family. In terms of assembly, homodimer or monomer. The Ni-sirohydrochlorin a,c-diamide reductive cyclase complex is composed of a NifH homolog component CfbC and a NifD homolog component CfbD. It depends on [4Fe-4S] cluster as a cofactor.

It catalyses the reaction Ni-sirohydrochlorin a,c-diamide + 3 AH2 + ATP + H2O = 15,17(3)-seco-F430-17(3)-acid + 3 A + ADP + phosphate. In terms of biological role, involved in the biosynthesis of the unique nickel-containing tetrapyrrole coenzyme F430, the prosthetic group of methyl-coenzyme M reductase (MCR), which plays a key role in methanogenesis and anaerobic methane oxidation. Catalyzes both the six-electron reduction of the tetrahydroporphyrin ring system and the gamma-lactamization of the c-acetamide side chain of Ni-sirohydrochlorin a,c-diamide to yield 15,17(3)-seco-F430-17(3)-acid (seco-F430), the last intermediate in the biosynthesis of the coenzyme F430. This is Ni-sirohydrochlorin a,c-diamide reductive cyclase complex, component CfbD from Methanocaldococcus jannaschii (strain ATCC 43067 / DSM 2661 / JAL-1 / JCM 10045 / NBRC 100440) (Methanococcus jannaschii).